The chain runs to 44 residues: Conotoxin Rg11a (44 aa).

4 disulfides stabilise this stretch: Cys-1-Cys-15, Cys-8-Cys-22, Cys-14-Cys-30, and Cys-21-Cys-36.

In terms of tissue distribution, expressed by the venom duct.

The protein localises to the secreted. In terms of biological role, neurotoxin. Elicits hypersensibility when injected intracranially in mice. May act via potassium channel currents. In Conus regius (Crown cone), this protein is Conotoxin Rg11a.